Reading from the N-terminus, the 904-residue chain is Nitrate reductase [NADH] 2 (904 aa).

Composition is skewed to polar residues over residues 1 to 10 and 35 to 50; these read MAASVENRQF and PSPN…NSTI. Residues 1-65 are disordered; it reads MAASVENRQF…SSEDDDDDDE (65 aa). Over residues 56–65 the composition is skewed to acidic residues; the sequence is SSEDDDDDDE. Cysteine 183 contacts Mo-molybdopterin. In terms of domain architecture, Cytochrome b5 heme-binding spans 531 to 606; the sequence is SKMYSMSEVR…LEDFRIGELI (76 aa). Heme contacts are provided by histidine 566 and histidine 589. Residues 647–759 form the FAD-binding FR-type domain; it reads REKIPCKLID…KGPLGHIEYQ (113 aa). FAD is bound by residues 699-702, 716-720, phenylalanine 721, phenylalanine 728, 733-735, and threonine 786; these read RAYT, VVKIY, and QMS.

Belongs to the nitrate reductase family. As to quaternary structure, homodimer. Requires FAD as cofactor. The cofactor is heme. Mo-molybdopterin is required as a cofactor.

The enzyme catalyses nitrite + NAD(+) + H2O = nitrate + NADH + H(+). Regulated by the nitrogen source and controlled by the circadian rhythm. Its function is as follows. Nitrate reductase is a key enzyme involved in the first step of nitrate assimilation in plants, fungi and bacteria. This chain is Nitrate reductase [NADH] 2 (NIA2), found in Nicotiana tabacum (Common tobacco).